Reading from the N-terminus, the 938-residue chain is Isoleucine--tRNA ligase (938 aa).

The 'HIGH' region motif lies at 58–68; it reads PYANGSIHIGH. Lys-183 carries the post-translational modification N6-acetyllysine. An L-isoleucyl-5'-AMP-binding site is contributed by Glu-561. A 'KMSKS' region motif is present at residues 602–606; it reads KMSKS. Lys-605 serves as a coordination point for ATP. Cys-901, Cys-904, Cys-921, and Cys-924 together coordinate Zn(2+).

It belongs to the class-I aminoacyl-tRNA synthetase family. IleS type 1 subfamily. Monomer. The cofactor is Zn(2+).

The protein localises to the cytoplasm. It catalyses the reaction tRNA(Ile) + L-isoleucine + ATP = L-isoleucyl-tRNA(Ile) + AMP + diphosphate. In terms of biological role, catalyzes the attachment of isoleucine to tRNA(Ile). As IleRS can inadvertently accommodate and process structurally similar amino acids such as valine, to avoid such errors it has two additional distinct tRNA(Ile)-dependent editing activities. One activity is designated as 'pretransfer' editing and involves the hydrolysis of activated Val-AMP. The other activity is designated 'posttransfer' editing and involves deacylation of mischarged Val-tRNA(Ile). The protein is Isoleucine--tRNA ligase of Escherichia fergusonii (strain ATCC 35469 / DSM 13698 / CCUG 18766 / IAM 14443 / JCM 21226 / LMG 7866 / NBRC 102419 / NCTC 12128 / CDC 0568-73).